The following is a 453-amino-acid chain: Secreted triacylglycerol lipase LIP2 (453 aa).

An N-terminal signal peptide occupies residues 1 to 19 (MKLSLVVLTLISVAAQALA). N-linked (GlcNAc...) asparagine glycosylation is present at Asn-98. Cys-115 and Cys-284 form a disulfide bridge. Ser-197 functions as the Nucleophile in the catalytic mechanism. Asn-230 carries an N-linked (GlcNAc...) asparagine glycan. Catalysis depends on residues Asp-344 and His-378. Cysteines 360 and 406 form a disulfide.

Belongs to the AB hydrolase superfamily. Lipase family. Class Lip subfamily.

The protein localises to the secreted. It carries out the reaction a triacylglycerol + H2O = a diacylglycerol + a fatty acid + H(+). The catalysed reaction is a monoacylglycerol + H2O = glycerol + a fatty acid + H(+). It catalyses the reaction a diacylglycerol + H2O = a monoacylglycerol + a fatty acid + H(+). The activity is significantly increased in the presence of Triton X-100 and partially inhibited by PMSF but unaffected by univalent and divalent metal ions. Activity is significantly decreased in acetate buffer compared to that in citrate buffer at the same pH. Its function is as follows. Major secreted lipase involved in Dandruff and seborrheic dermatitis (D/SD) probably via lipase-mediated breakdown of sebaceous lipids and release of irritating free fatty acids. Has triacylglycerol lipase activity and is able to hydrolyze triolein, tristearin, trilinolein, tripalmitoylglycerol and trihexadecenoin. Hydrolyze diacylglycerols such as distearin, dilinolein, dipalmitoylglycerol and dipalmitolein. Shows high esterase activity against 4-nitrophenyl palmitate and 1-naphthyl palmitate but not 1-naphthyl acetate, suggesting that it specifically recognizes fatty acids. Mostly converts monoolein to di- and triolein, while free fatty acids are only produced in low amounts. In Malassezia globosa (strain ATCC MYA-4612 / CBS 7966) (Dandruff-associated fungus), this protein is Secreted triacylglycerol lipase LIP2.